We begin with the raw amino-acid sequence, 166 residues long: Small ribosomal subunit protein uS5 (166 aa).

Residues 11–74 form the S5 DRBM domain; it reads LQEKLIAVNR…EKARRNMINV (64 aa).

Belongs to the universal ribosomal protein uS5 family. In terms of assembly, part of the 30S ribosomal subunit. Contacts proteins S4 and S8.

In terms of biological role, with S4 and S12 plays an important role in translational accuracy. Functionally, located at the back of the 30S subunit body where it stabilizes the conformation of the head with respect to the body. The protein is Small ribosomal subunit protein uS5 of Haemophilus ducreyi (strain 35000HP / ATCC 700724).